The sequence spans 225 residues: uncharacterized protein (225 aa).

A divalent metal cation is bound by residues E69, E71, and D100.

It belongs to the FAH family.

This is an uncharacterized protein from Pyrococcus abyssi (strain GE5 / Orsay).